We begin with the raw amino-acid sequence, 314 residues long: Atrochrysone carboxyl ACP thioesterase AgnL7 (314 aa).

His103, His105, Asp107, and His108 together coordinate Zn(2+). The active-site Proton donor/acceptor is Asp107.

This sequence belongs to the metallo-beta-lactamase superfamily. Zn(2+) serves as cofactor.

It carries out the reaction atrochrysone carboxyl-[ACP] + H2O = atrochrysone carboxylate + holo-[ACP] + H(+). Its pathway is secondary metabolite biosynthesis. Its function is as follows. Atrochrysone carboxyl ACP thioesterase; part of the gene cluster that mediates the biosynthesis of agnestins, dihydroxy-xanthone metabolites. The pathway begins with the assembly and cyclization of atrochrysone thioester by the non-reducing polyketide synthase Agnpks1. The atrochrysone carboxyl ACP thioesterase AgnL7 then breaks the thioester bond and releases the atrochrysone carboxylic acid as the first enzyme-free intermediate. The decarboxylase AgnL1 then catalyzes the concerted decarboxylation-elimination required to convert atochrysone carboxylic acid into emodin anthrone, which is further oxidized to emodin by the anthrone oxygenase AgnL2. Emodin then undergoes reduction catalyzed by the oxidoreductase AgnL4 to yield the dihydroquinone tautomer which is the substrate for reduction by the short chain dehydrogenase AgnL6 reduction to produce hydroxyketone, followed by AgnL8 dehydration and likely spontaneous autoxidation to chrysophanol. Baeyer-Villiger oxidation by the oxidase AgnL3 leads to monodictyphenone via cleavage of the C-10/C-10a bond of chrysophanol. Alternative cleavage at the C-4a/C-10 bond of chrysophanol also leads to the formation some cephalone F. Further conversion to agnestins A and B, requires reduction to dihydro-monodictyphenone, oxidation to agnestin C probably via an epoxide, and rearrangement to either agnestin A or agnestin B directly, although agnestin A or agnestin B can also interconvert. Within the cluster, AgnR1 is the only unassigned oxidoreductase present which could be involved in this conversion. However, AgnR1 seems not to be involved in this step, and thus genes involved in the proposed oxidation/reduction may be located elsewhere on the genome. Further agnestin A derivatives are probably formed by spontaneous decarboxylations, dehydrations and methanolysis reactions. The polypeptide is Atrochrysone carboxyl ACP thioesterase AgnL7 (Paecilomyces divaricatus (Penicillium divaricatum)).